Consider the following 272-residue polypeptide: MNNSEQLIALKESETAFLKYFNKADYELVDFSVVEKLDWKQLNHEDLQQMGERNFWQHEHQIYALRNDFTDQLLRYYSMYPTAATKVAYTGLIIRNNEAAVQVGLENYAPSLANVQQSLKLFIQFIQQQLRDNVHFVVLGHYQLLDALLDKSLQTPDILSMIEERNLSGLVTYLSTEHPIVQILKENTQQQLNVLEHYIPNDHPALVELKIWERWLHKQGYKDIHLDITAQPPRSYYTGLFIQCHFAENESRVLTGGYYKGSIEGFGLGLTL.

This sequence belongs to the class-II aminoacyl-tRNA synthetase family. HisZ subfamily. As to quaternary structure, heteromultimer composed of HisG and HisZ subunits.

It localises to the cytoplasm. The protein operates within amino-acid biosynthesis; L-histidine biosynthesis; L-histidine from 5-phospho-alpha-D-ribose 1-diphosphate: step 1/9. Its function is as follows. Required for the first step of histidine biosynthesis. May allow the feedback regulation of ATP phosphoribosyltransferase activity by histidine. This Staphylococcus aureus (strain USA300) protein is ATP phosphoribosyltransferase regulatory subunit.